Here is a 192-residue protein sequence, read N- to C-terminus: MKRYIVGISGASGAILAVTLVSELARLGHHVDVIISPAAQKTLYYELETKSFLATIPSNLHKNILIHRITSIESSLSSGSTLVDATIIVPCSVATIAAISCGLSDNLLRRVADVALKEKRPLILVPRETPLSAIHLENLLKLAQNGAVILPPMPTWYFRPETANDIANDIVGKILAILQLDSPLIKRWENPH.

Residues 10–12 (GAS), S36, 92–95 (SVAT), and R127 contribute to the FMN site. Dimethylallyl phosphate-binding residues include Y157 and K173.

The protein belongs to the UbiX/PAD1 family.

It carries out the reaction dimethylallyl phosphate + FMNH2 = prenylated FMNH2 + phosphate. In terms of biological role, flavin prenyltransferase that catalyzes the synthesis of the prenylated FMN cofactor (prenyl-FMN) for 4-hydroxy-3-polyprenylbenzoic acid decarboxylase UbiD. The prenyltransferase is metal-independent and links a dimethylallyl moiety from dimethylallyl monophosphate (DMAP) to the flavin N5 and C6 atoms of FMN. The protein is Flavin prenyltransferase UbiX of Chlamydia muridarum (strain MoPn / Nigg).